A 224-amino-acid chain; its full sequence is Elongation factor 1-beta (224 aa).

The protein belongs to the EF-1-beta/EF-1-delta family. As to quaternary structure, EF-1 is composed of 4 subunits: alpha, beta (1B-alpha=beta'), delta (1B-beta), and gamma (1B-gamma).

Functionally, EF-1-beta and EF-1-beta' stimulate the exchange of GDP bound to EF-1-alpha to GTP. This Oryza sativa subsp. japonica (Rice) protein is Elongation factor 1-beta.